The following is a 279-amino-acid chain: High choriolytic enzyme 2 (279 aa).

Residues 1-20 form the signal peptide; it reads MNLASSACLLLLFLLGIAQA. A propeptide spans 21–79 (activation peptide); sequence LPVQNEEGHEEGNKEGHGEEGVEEGDEDDFVDFTTRILTSNNNTDQLLLEGDLVAPTNR. Over residues 26 to 40 the composition is skewed to basic and acidic residues; sequence EEGHEEGNKEGHGEE. The disordered stretch occupies residues 26-46; that stretch reads EEGHEEGNKEGHGEEGVEEGD. An N-linked (GlcNAc...) asparagine glycan is attached at Asn62. Residues 80 to 279 enclose the Peptidase M12A domain; the sequence is NAMKCWYNSC…TRSNVLYNCR (200 aa). 3 cysteine pairs are disulfide-bonded: Cys84–Cys89, Cys129–Cys278, and Cys150–Cys170. His178 is a Zn(2+) binding site. Glu179 is a catalytic residue. Positions 182 and 188 each coordinate Zn(2+).

The cofactor is Zn(2+).

The protein resides in the zymogen granule. The enzyme catalyses Hydrolysis of the inner layer of fish egg envelope. Also hydrolysis of casein and small molecule substrates such as succinyl-Leu-Leu-Val-Tyr-|-7-(4-methyl)coumarylamide.. Its function is as follows. Participates in the breakdown of the egg envelope, which is derived from the egg extracellular matrix, at the time of hatching. Thus allowing the newly hatched fish to swim free. HCE binds tightly to the egg envelope while it exerts the choriolytic swelling action. In Oryzias latipes (Japanese rice fish), this protein is High choriolytic enzyme 2 (hceb).